The chain runs to 348 residues: Chaperone protein DnaJ (348 aa).

The region spanning 3–65 is the J domain; sequence DLYGILGVDH…EQRQRYDRHV (63 aa). The CR-type zinc finger occupies 109-191; it reads GGSQVVKIDS…CYGNGSRSAP (83 aa). 8 residues coordinate Zn(2+): Cys122, Cys125, Cys139, Cys142, Cys165, Cys168, Cys179, and Cys182. CXXCXGXG motif repeat units follow at residues 122-129, 139-146, 165-172, and 179-186; these read CDVCNGTR, CFDCNGSG, CSKCRGNG, and CRRCYGNG.

This sequence belongs to the DnaJ family. As to quaternary structure, homodimer. It depends on Zn(2+) as a cofactor.

The protein resides in the cytoplasm. Its function is as follows. Participates actively in the response to hyperosmotic and heat shock by preventing the aggregation of stress-denatured proteins and by disaggregating proteins, also in an autonomous, DnaK-independent fashion. Unfolded proteins bind initially to DnaJ; upon interaction with the DnaJ-bound protein, DnaK hydrolyzes its bound ATP, resulting in the formation of a stable complex. GrpE releases ADP from DnaK; ATP binding to DnaK triggers the release of the substrate protein, thus completing the reaction cycle. Several rounds of ATP-dependent interactions between DnaJ, DnaK and GrpE are required for fully efficient folding. Also involved, together with DnaK and GrpE, in the DNA replication of plasmids through activation of initiation proteins. The sequence is that of Chaperone protein DnaJ from Tropheryma whipplei (strain Twist) (Whipple's bacillus).